A 327-amino-acid polypeptide reads, in one-letter code: Eukaryotic translation initiation factor 3 subunit I (327 aa).

WD repeat units follow at residues 8–49 (GHER…GSYD), 51–89 (HNGA…CIYT), 188–227 (VHRY…KLKQ), 229–268 (KSER…GHFE), and 285–324 (GHFG…LGFT).

This sequence belongs to the eIF-3 subunit I family. In terms of assembly, component of the eukaryotic translation initiation factor 3 (eIF-3) complex.

The protein localises to the cytoplasm. In terms of biological role, component of the eukaryotic translation initiation factor 3 (eIF-3) complex, which is involved in protein synthesis of a specialized repertoire of mRNAs and, together with other initiation factors, stimulates binding of mRNA and methionyl-tRNAi to the 40S ribosome. The eIF-3 complex specifically targets and initiates translation of a subset of mRNAs involved in cell proliferation. This chain is Eukaryotic translation initiation factor 3 subunit I, found in Caenorhabditis briggsae.